A 196-amino-acid chain; its full sequence is 3-isopropylmalate dehydratase small subunit (196 aa).

Belongs to the LeuD family. LeuD type 1 subfamily. As to quaternary structure, heterodimer of LeuC and LeuD.

It carries out the reaction (2R,3S)-3-isopropylmalate = (2S)-2-isopropylmalate. It participates in amino-acid biosynthesis; L-leucine biosynthesis; L-leucine from 3-methyl-2-oxobutanoate: step 2/4. Its function is as follows. Catalyzes the isomerization between 2-isopropylmalate and 3-isopropylmalate, via the formation of 2-isopropylmaleate. This is 3-isopropylmalate dehydratase small subunit from Corynebacterium aurimucosum (strain ATCC 700975 / DSM 44827 / CIP 107346 / CN-1) (Corynebacterium nigricans).